The sequence spans 155 residues: Xanthine-guanine phosphoribosyltransferase 2 (155 aa).

Residues 37–38 (RG) and 91–99 (DDLVDTGNT) contribute to the 5-phospho-alpha-D-ribose 1-diphosphate site. Aspartate 92 provides a ligand contact to Mg(2+). Aspartate 95 and isoleucine 138 together coordinate guanine. Residues aspartate 95 and isoleucine 138 each coordinate xanthine. Residues 95 to 99 (DTGNT) and 137 to 138 (WI) each bind GMP.

Belongs to the purine/pyrimidine phosphoribosyltransferase family. XGPT subfamily. In terms of assembly, homotetramer. Mg(2+) serves as cofactor.

The protein resides in the cell inner membrane. It catalyses the reaction GMP + diphosphate = guanine + 5-phospho-alpha-D-ribose 1-diphosphate. The catalysed reaction is XMP + diphosphate = xanthine + 5-phospho-alpha-D-ribose 1-diphosphate. The enzyme catalyses IMP + diphosphate = hypoxanthine + 5-phospho-alpha-D-ribose 1-diphosphate. It functions in the pathway purine metabolism; GMP biosynthesis via salvage pathway; GMP from guanine: step 1/1. It participates in purine metabolism; XMP biosynthesis via salvage pathway; XMP from xanthine: step 1/1. In terms of biological role, purine salvage pathway enzyme that catalyzes the transfer of the ribosyl-5-phosphate group from 5-phospho-alpha-D-ribose 1-diphosphate (PRPP) to the N9 position of the 6-oxopurines guanine and xanthine to form the corresponding ribonucleotides GMP (guanosine 5'-monophosphate) and XMP (xanthosine 5'-monophosphate), with the release of PPi. To a lesser extent, also acts on hypoxanthine. The polypeptide is Xanthine-guanine phosphoribosyltransferase 2 (Haemophilus influenzae (strain 86-028NP)).